The chain runs to 499 residues: Guanosine-5'-triphosphate,3'-diphosphate pyrophosphatase (499 aa).

This sequence belongs to the GppA/Ppx family. GppA subfamily.

It carries out the reaction guanosine 3'-diphosphate 5'-triphosphate + H2O = guanosine 3',5'-bis(diphosphate) + phosphate + H(+). Its pathway is purine metabolism; ppGpp biosynthesis; ppGpp from GTP: step 2/2. In terms of biological role, catalyzes the conversion of pppGpp to ppGpp. Guanosine pentaphosphate (pppGpp) is a cytoplasmic signaling molecule which together with ppGpp controls the 'stringent response', an adaptive process that allows bacteria to respond to amino acid starvation, resulting in the coordinated regulation of numerous cellular activities. This chain is Guanosine-5'-triphosphate,3'-diphosphate pyrophosphatase, found in Sodalis glossinidius (strain morsitans).